The chain runs to 294 residues: Type 4 apparatus protein DotZ (294 aa).

In terms of assembly, the T4BSS is a complex nanomachine composed of several subcomplexes. This subunit is part of the Type IV Coupling Complex (T4CC), a subcomplex composed of the DotLMNYZ core and the IcmSW-LvgA adapter subunits, linked by the C-terminal tail of DotL. Six DotLMNYZ hetero-pentameric units may assemble into a hexameric nanomachine, forming an inner membrane channel for effectors to pass through. Makes significant contact with DotN and DotY, but engages weakly with DotM and DotL. DotY and DotZ are co-dependent for the assembly into the T4CC.

It is found in the cytoplasm. Its function is as follows. Component of the Dot/Icm type IVB secretion system (T4BSS), which is used to inject bacterial effector proteins into eukaryotic host cells. Part of a subcomplex which recruits effector proteins and delivers them to the core transmembrane subcomplex. DotY and DotZ play a role in effector translocation, but are not essential and do not influence the stability of the subcomplex main components. The DotY/DotZ main function is to optimize secretion by modulating the delivery trajectory of the IcmSW module and the localization of the machinery to the poles. This is Type 4 apparatus protein DotZ from Legionella pneumophila subsp. pneumophila (strain Philadelphia 1 / ATCC 33152 / DSM 7513).